The following is a 183-amino-acid chain: Porphobilinogen deaminase (183 aa).

It belongs to the HMBS family. As to quaternary structure, monomer. Requires dipyrromethane as cofactor.

The catalysed reaction is 4 porphobilinogen + H2O = hydroxymethylbilane + 4 NH4(+). The protein operates within porphyrin-containing compound metabolism; protoporphyrin-IX biosynthesis; coproporphyrinogen-III from 5-aminolevulinate: step 2/4. In terms of biological role, tetrapolymerization of the monopyrrole PBG into the hydroxymethylbilane pre-uroporphyrinogen in several discrete steps. The protein is Porphobilinogen deaminase (hemC) of Yersinia intermedia.